The sequence spans 53 residues: UPF0337 protein LJ_0034.1 (53 aa).

Positions 27–53 (AREVEGKAQQAKGKVKSKATEVKEDLE) are disordered. Basic and acidic residues predominate over residues 44 to 53 (KATEVKEDLE).

Belongs to the UPF0337 (CsbD) family.

This Lactobacillus johnsonii (strain CNCM I-12250 / La1 / NCC 533) protein is UPF0337 protein LJ_0034.1.